Reading from the N-terminus, the 497-residue chain is Subtilisin-like protease CPC735_031240 (497 aa).

Positions Met-1–Pro-16 are cleaved as a signal peptide. The propeptide occupies Ser-17 to Trp-136. Positions Ser-43–His-134 constitute an Inhibitor I9 domain. One can recognise a Peptidase S8 domain in the interval Pro-146–Ile-452. Active-site charge relay system residues include Asp-182 and His-214. N-linked (GlcNAc...) asparagine glycosylation is found at Asn-244 and Asn-284. Ser-380 serves as the catalytic Charge relay system. N-linked (GlcNAc...) asparagine glycosylation is present at Asn-447.

The protein belongs to the peptidase S8 family.

Its subcellular location is the secreted. Functionally, secreted subtilisin-like serine protease with keratinolytic activity that contributes to pathogenicity. The chain is Subtilisin-like protease CPC735_031240 from Coccidioides posadasii (strain C735) (Valley fever fungus).